The sequence spans 373 residues: MSPCPPQQSRNRVIQLSTSELGEMELTWQEIMSITELQGLNAPSEPSFEPQAPAPYLGPPPPTTYCPCSIHPDSGFPLPPPPYELPASTSHVPDPPYSYGNMAIPVSKPLSLSGLLSEPLQDPLALLDIGLPAGPPKPQEDPESDSGLSLNYSDAESLELEGTEAGRRRSEYVEMYPVEYPYSLMPNSLAHSNYTLPAAETPLALEPSSGPVRAKPTARGEAGSRDERRALAMKIPFPTDKIVNLPVDDFNELLARYPLTESQLALVRDIRRRGKNKVAAQNCRKRKLETIVQLERELERLTNERERLLRARGEADRTLEVMRQQLTELYRDIFQHLRDESGNSYSPEEYALQQAADGTIFLVPRGTKMEATD.

The interval 1–83 is required for interaction with MAPK8; the sequence is MSPCPPQQSR…SGFPLPPPPY (83 aa). The transactivation domain stretch occupies residues 1–206; the sequence is MSPCPPQQSR…PAAETPLALE (206 aa). 2 short sequence motifs (PXY motif) span residues 61-65 and 79-83; these read PPTTY and PPPPY. The tract at residues 127-150 is disordered; the sequence is LDIGLPAGPPKPQEDPESDSGLSL. Phosphoserine; by MAPK8 is present on S157. A Phosphoserine; by PKA modification is found at S170. The interval 205–226 is disordered; that stretch reads LEPSSGPVRAKPTARGEAGSRD. Residues 266–329 form the bZIP domain; the sequence is LVRDIRRRGK…EVMRQQLTEL (64 aa). The tract at residues 268 to 287 is basic motif; it reads RDIRRRGKNKVAAQNCRKRK. A leucine-zipper region spans residues 291–298; that stretch reads IVQLEREL. A Glycyl lysine isopeptide (Lys-Gly) (interchain with G-Cter in SUMO1) cross-link involves residue K368.

This sequence belongs to the bZIP family. CNC subfamily. As to quaternary structure, homodimer; can bind DNA as a homodimer. Erythroid transcription activator nuclear factor erythroid-derived 2 (NF-E2), composed of a heterodimer of NFE2 and MAFK, possesses transactivation activity on beta-globin. Also forms high affinity heterodimer with MAFG; the interaction promotes erythropoiesis. Interacts (via the PXY motif 1) with ITCH (via the WW 1 domain); the interaction promotes 'Lys63'-linked ubiquitination of NFE2, translocates it to the cytoplasm and inhibits its transactivation activity. Interacts with KMT2D/MLL2; the interaction promotes transactivation of the beta-globin locus. Interacts with MAPK8 (phosphorylated form); the interaction leads to phosphorylation of NFE2 in undifferentiated cells. In terms of processing, phosphorylated on serine residues. In undifferentiated erythrocytes, phosphorylated by MAPK8 which then leads to ubiquitination and protein degradation. Sumoylated. Sumoylation is required for translocation to nuclear bodies PODs, anchoring to the gene loci, and transactivation of the beta-globin gene. Post-translationally, ubiquitinated mainly by 'Lys63'-linked ubiquitin. Polyubiquitination with 'Lys63'-linked ubiquitin by ITCH retains NFE2 in the cytoplasm preventing its transactivation activity. In undifferentiated erythrocyte, ubiquitinated after MAPK8-mediatd phosphorylation leading to protein degradation. In terms of tissue distribution, expressed in hematopoietic cells and also in colon and testis.

The protein resides in the nucleus. It is found in the PML body. The protein localises to the cytoplasm. In terms of biological role, component of the NF-E2 complex essential for regulating erythroid and megakaryocytic maturation and differentiation. Binds to the hypersensitive site 2 (HS2) of the beta-globin control region (LCR). This subunit (NFE2) recognizes the TCAT/C sequence of the AP-1-like core palindrome present in a number of erythroid and megakaryocytic gene promoters. Requires MAFK or other small MAF proteins for binding to the NF-E2 motif. May play a role in all aspects of hemoglobin production from globin and heme synthesis to procurement of iron. The sequence is that of Transcription factor NF-E2 45 kDa subunit (NFE2) from Homo sapiens (Human).